A 938-amino-acid polypeptide reads, in one-letter code: Isoleucine--tRNA ligase (938 aa).

The short motif at 58–68 is the 'HIGH' region element; the sequence is PYANGHLHMGH. Glu-566 provides a ligand contact to L-isoleucyl-5'-AMP. The 'KMSKS' region motif lies at 607-611; sequence KMSKS. Residue Lys-610 participates in ATP binding. Zn(2+)-binding residues include Cys-906, Cys-909, Cys-926, and Cys-929.

This sequence belongs to the class-I aminoacyl-tRNA synthetase family. IleS type 1 subfamily. In terms of assembly, monomer. The cofactor is Zn(2+).

The protein resides in the cytoplasm. It catalyses the reaction tRNA(Ile) + L-isoleucine + ATP = L-isoleucyl-tRNA(Ile) + AMP + diphosphate. In terms of biological role, catalyzes the attachment of isoleucine to tRNA(Ile). As IleRS can inadvertently accommodate and process structurally similar amino acids such as valine, to avoid such errors it has two additional distinct tRNA(Ile)-dependent editing activities. One activity is designated as 'pretransfer' editing and involves the hydrolysis of activated Val-AMP. The other activity is designated 'posttransfer' editing and involves deacylation of mischarged Val-tRNA(Ile). In Desulfovibrio desulfuricans (strain ATCC 27774 / DSM 6949 / MB), this protein is Isoleucine--tRNA ligase.